The sequence spans 89 residues: Small ribosomal subunit protein uS15 (89 aa).

The protein belongs to the universal ribosomal protein uS15 family. As to quaternary structure, part of the 30S ribosomal subunit. Forms a bridge to the 50S subunit in the 70S ribosome, contacting the 23S rRNA.

In terms of biological role, one of the primary rRNA binding proteins, it binds directly to 16S rRNA where it helps nucleate assembly of the platform of the 30S subunit by binding and bridging several RNA helices of the 16S rRNA. Forms an intersubunit bridge (bridge B4) with the 23S rRNA of the 50S subunit in the ribosome. This chain is Small ribosomal subunit protein uS15, found in Pseudomonas aeruginosa (strain LESB58).